We begin with the raw amino-acid sequence, 280 residues long: uncharacterized protein (280 aa).

The N-terminal stretch at 1-21 (MRPVIKVGLSTASVYPLRAEA) is a signal peptide.

It to M.tuberculosis Rv0498 and S.coelicolor SCO3347.

This is an uncharacterized protein from Mycobacterium leprae (strain TN).